Consider the following 976-residue polypeptide: Leucine--tRNA ligase (976 aa).

The segment covering 1–23 (MTESPTTTPGSTSGAPSGVPSGV) has biased composition (low complexity). The segment at 1–34 (MTESPTTTPGSTSGAPSGVPSGVNDAESDAPRHR) is disordered. The 'HIGH' region motif lies at 86–97 (PYPSGEGLHVGH). The short motif at 745-749 (KIGKS) is the 'KMSKS' region element. Residue K748 participates in ATP binding.

This sequence belongs to the class-I aminoacyl-tRNA synthetase family.

The protein resides in the cytoplasm. The enzyme catalyses tRNA(Leu) + L-leucine + ATP = L-leucyl-tRNA(Leu) + AMP + diphosphate. The protein is Leucine--tRNA ligase of Mycobacterium marinum (strain ATCC BAA-535 / M).